The chain runs to 461 residues: Photosystem II CP43 reaction center protein (461 aa).

Residues 1-2 (ME) constitute a propeptide that is removed on maturation. Residue Thr3 is modified to N-acetylthreonine. Thr3 carries the post-translational modification Phosphothreonine. 5 helical membrane-spanning segments follow: residues 57 to 81 (LFEVSHFVPEKPMYEQGLILLPHIA), 122 to 143 (LIGPETLEESFPFFGYIWKDKN), 166 to 188 (KAMYFGGIYDTWAPGGGDVRIIT), 243 to 263 (TPWPWARRAFVWSGEAYLSYS), and 279 to 300 (WFNNTAYPSEFYGPTGPEASQA). Glu355 is a binding site for [CaMn4O5] cluster. The helical transmembrane segment at 435–459 (RARAAAAGFEKGIDRVDEPVLSMRP) threads the bilayer.

It belongs to the PsbB/PsbC family. PsbC subfamily. As to quaternary structure, PSII is composed of 1 copy each of membrane proteins PsbA, PsbB, PsbC, PsbD, PsbE, PsbF, PsbH, PsbI, PsbJ, PsbK, PsbL, PsbM, PsbT, PsbX, PsbY, PsbZ, Psb30/Ycf12, at least 3 peripheral proteins of the oxygen-evolving complex and a large number of cofactors. It forms dimeric complexes. The cofactor is Binds multiple chlorophylls and provides some of the ligands for the Ca-4Mn-5O cluster of the oxygen-evolving complex. It may also provide a ligand for a Cl- that is required for oxygen evolution. PSII binds additional chlorophylls, carotenoids and specific lipids..

It is found in the plastid. The protein resides in the chloroplast thylakoid membrane. Functionally, one of the components of the core complex of photosystem II (PSII). It binds chlorophyll and helps catalyze the primary light-induced photochemical processes of PSII. PSII is a light-driven water:plastoquinone oxidoreductase, using light energy to abstract electrons from H(2)O, generating O(2) and a proton gradient subsequently used for ATP formation. The chain is Photosystem II CP43 reaction center protein from Chlamydomonas moewusii (Chlamydomonas eugametos).